A 249-amino-acid polypeptide reads, in one-letter code: Aspartate/glutamate leucyltransferase (249 aa).

This sequence belongs to the R-transferase family. Bpt subfamily.

Its subcellular location is the cytoplasm. It catalyses the reaction N-terminal L-glutamyl-[protein] + L-leucyl-tRNA(Leu) = N-terminal L-leucyl-L-glutamyl-[protein] + tRNA(Leu) + H(+). The catalysed reaction is N-terminal L-aspartyl-[protein] + L-leucyl-tRNA(Leu) = N-terminal L-leucyl-L-aspartyl-[protein] + tRNA(Leu) + H(+). Its function is as follows. Functions in the N-end rule pathway of protein degradation where it conjugates Leu from its aminoacyl-tRNA to the N-termini of proteins containing an N-terminal aspartate or glutamate. This chain is Aspartate/glutamate leucyltransferase, found in Brucella abortus (strain S19).